A 272-amino-acid chain; its full sequence is Orotidine 5'-phosphate decarboxylase (272 aa).

The Proton donor role is filled by K96.

The protein belongs to the OMP decarboxylase family. Type 2 subfamily.

The catalysed reaction is orotidine 5'-phosphate + H(+) = UMP + CO2. It participates in pyrimidine metabolism; UMP biosynthesis via de novo pathway; UMP from orotate: step 2/2. This chain is Orotidine 5'-phosphate decarboxylase, found in Christiangramia forsetii (strain DSM 17595 / CGMCC 1.15422 / KT0803) (Gramella forsetii).